A 116-amino-acid polypeptide reads, in one-letter code: MLSCRLQCALAALCIVLALGGVTGAPSDPRLRQFLQKSLAAATGKQELAKYFLAELLSEPNQTENDALEPEDLPQAAEQDEMRLELQRSANSNPAMAPRERKAGCKNFFWKTFTSC.

Positions 1 to 24 are cleaved as a signal peptide; the sequence is MLSCRLQCALAALCIVLALGGVTG. A propeptide spanning residues 35–88 is cleaved from the precursor; the sequence is LQKSLAAATGKQELAKYFLAELLSEPNQTENDALEPEDLPQAAEQDEMRLELQR. Threonine amide is present on Thr-43. Cys-105 and Cys-116 are disulfide-bonded.

Belongs to the somatostatin family. C-terminal amidation of the neuronostatin peptide is required for its biological activity, including for the regulation of mean arterial pressure. In the pancreas, somatostatin is expressed in delta cells of the islets of Langerhans. In the stomach, it is expressed in parietal cells of oxyntic mucosa and in the small intestine, it is found in the villus (at protein level). Neuronostatin is expressed in the pancreas in delta cells of the islets of Langerhans, as well as in the stomach, in parietal cells of oxyntic mucosa and in the small intestine, in the villus (at protein level).

It localises to the secreted. Its function is as follows. Inhibits the secretion of pituitary hormones, including that of growth hormone/somatotropin (GH1), PRL, ACTH, luteinizing hormone (LH) and TSH. Also impairs ghrelin- and GnRH-stimulated secretion of GH1 and LH; the inhibition of ghrelin-stimulated secretion of GH1 can be further increased by neuronostatin. In terms of biological role, may enhance low-glucose-induced glucagon release by pancreatic alpha cells. This effect may be mediated by binding to GPR107 and PKA activation. May regulate cardiac contractile function. May compromise cardiomyocyte viability. In the central nervous system, may impair memory retention and may affect hippocampal excitability. May also have anxiolytic and anorexigenic effects. May play a role in arterial pressure regulation. May inhibit basal, but not ghrelin- or GnRH-stimulated secretion of GH1 or LH, but does not affect the release of other pituitary hormones, including PRL, ACTH, FSH or TSH. Potentiates inhibitory action of somatostatin on ghrelin-stimulated secretion of GH1, but not that on GnRH-stimulated secretion of LH. This is Somatostatin (Sst) from Mus musculus (Mouse).